We begin with the raw amino-acid sequence, 57 residues long: uncharacterized protein (57 aa).

Residues 1–57 (MANHRGGSGNFAEDRERASEAGKKGGQHSGGNFKNDPQRASEAGKKGGKSSHGKSDN) form a disordered region. Composition is skewed to basic and acidic residues over residues 12-23 (AEDRERASEAGK) and 36-45 (DPQRASEAGK). Basic residues predominate over residues 46-57 (KGGKSSHGKSDN).

The protein belongs to the con-10 family.

This is an uncharacterized protein from Escherichia coli (strain K12).